The sequence spans 378 residues: Transcription initiation factor IIA subunit 1 (378 aa).

At Ala-2 the chain carries N-acetylalanine. Low complexity-rich tracts occupy residues Gln-69–Gln-79, Gln-89–Val-106, and Pro-247–Thr-281. Disordered regions lie at residues Gln-69–Ile-108 and Pro-247–Phe-331. Phosphoserine; by TAF1 is present on residues Ser-282, Ser-283, Ser-318, and Ser-323. Residues Ser-282–Phe-331 are compositionally biased toward acidic residues. The DNA site is built by His-345 and Arg-346.

This sequence belongs to the TFIIA subunit 1 family. As to quaternary structure, TFIIA is a heterodimer of the large unprocessed subunit 1 and a small subunit gamma. It was originally believed to be a heterotrimer of an alpha (p35), a beta (p19) and a gamma subunit (p12). TFIIA forms a complex with TBP. Part of TBP-based Pol II pre-initiation complex (PIC), in which Pol II core assembles with general transcription factors and other specific initiation factors including GTF2E1, GTF2E2, GTF2F1, GTF2F2, TCEA1, ERCC2, ERCC3, GTF2H2, GTF2H3, GTF2H4, GTF2H5, GTF2A1, GTF2A2, GTF2B and TBP; this large multi-subunit PIC complex mediates DNA unwinding and targets Pol II core to the transcription start site where the first phosphodiester bond forms. The alpha and beta subunits are postranslationally produced from the precursor form by TASP1. The cleavage promotes proteasomal degradation. In terms of tissue distribution, expressed in pachytene spermatocytes and spermatids.

The protein resides in the nucleus. Functionally, TFIIA is a component of the transcription machinery of RNA polymerase II and plays an important role in transcriptional activation. TFIIA in a complex with TBP mediates transcriptional activity. This is Transcription initiation factor IIA subunit 1 (Gtf2a1) from Mus musculus (Mouse).